The chain runs to 385 residues: Acetate kinase (385 aa).

Asn9 serves as a coordination point for Mg(2+). Lys16 provides a ligand contact to ATP. Position 75 (Arg75) interacts with substrate. Asp132 (proton donor/acceptor) is an active-site residue. Residues 192-196 (HLGNG), 266-268 (DFR), and 314-318 (GIGEN) contribute to the ATP site. Glu368 is a Mg(2+) binding site.

This sequence belongs to the acetokinase family. In terms of assembly, homodimer. Mg(2+) is required as a cofactor. The cofactor is Mn(2+).

It localises to the cytoplasm. The enzyme catalyses acetate + ATP = acetyl phosphate + ADP. It functions in the pathway metabolic intermediate biosynthesis; acetyl-CoA biosynthesis; acetyl-CoA from acetate: step 1/2. Catalyzes the formation of acetyl phosphate from acetate and ATP. Can also catalyze the reverse reaction. The polypeptide is Acetate kinase (Mycobacterium bovis (strain ATCC BAA-935 / AF2122/97)).